The following is a 185-amino-acid chain: Ribosome-recycling factor (185 aa).

It belongs to the RRF family.

It is found in the cytoplasm. Functionally, responsible for the release of ribosomes from messenger RNA at the termination of protein biosynthesis. May increase the efficiency of translation by recycling ribosomes from one round of translation to another. The protein is Ribosome-recycling factor of Geobacter sulfurreducens (strain ATCC 51573 / DSM 12127 / PCA).